The sequence spans 251 residues: Aspartate/glutamate leucyltransferase (251 aa).

The protein belongs to the R-transferase family. Bpt subfamily.

It localises to the cytoplasm. It carries out the reaction N-terminal L-glutamyl-[protein] + L-leucyl-tRNA(Leu) = N-terminal L-leucyl-L-glutamyl-[protein] + tRNA(Leu) + H(+). It catalyses the reaction N-terminal L-aspartyl-[protein] + L-leucyl-tRNA(Leu) = N-terminal L-leucyl-L-aspartyl-[protein] + tRNA(Leu) + H(+). Its function is as follows. Functions in the N-end rule pathway of protein degradation where it conjugates Leu from its aminoacyl-tRNA to the N-termini of proteins containing an N-terminal aspartate or glutamate. This is Aspartate/glutamate leucyltransferase from Xanthomonas axonopodis pv. citri (strain 306).